The chain runs to 934 residues: 2-oxoglutarate dehydrogenase E1 component (934 aa).

Residues 515–537 are compositionally biased toward basic and acidic residues; it reads RAAQDKIDKSDKMDNPDMERPES. The segment at 515–544 is disordered; sequence RAAQDKIDKSDKMDNPDMERPESLQEPLQS.

The protein belongs to the alpha-ketoglutarate dehydrogenase family. Homodimer. Part of the 2-oxoglutarate dehydrogenase (OGDH) complex composed of E1 (2-oxoglutarate dehydrogenase), E2 (dihydrolipoamide succinyltransferase) and E3 (dihydrolipoamide dehydrogenase); the complex contains multiple copies of the three enzymatic components (E1, E2 and E3). Requires thiamine diphosphate as cofactor.

It carries out the reaction N(6)-[(R)-lipoyl]-L-lysyl-[protein] + 2-oxoglutarate + H(+) = N(6)-[(R)-S(8)-succinyldihydrolipoyl]-L-lysyl-[protein] + CO2. Its function is as follows. E1 component of the 2-oxoglutarate dehydrogenase (OGDH) complex which catalyzes the decarboxylation of 2-oxoglutarate, the first step in the conversion of 2-oxoglutarate to succinyl-CoA and CO(2). This Staphylococcus haemolyticus (strain JCSC1435) protein is 2-oxoglutarate dehydrogenase E1 component.